Consider the following 250-residue polypeptide: MFFMDSKNLFKKAAELIKSSQKTMVLTGAGISTESGIPDFRSPGTGLWENMDPTEVLSTKVLFNSPEEFYRVGFKILSSMRNAEPNEAHYILSEMEKEGIIAGVITQNIDNLHQKAGSKKVYEVHGNTREGSCLRCGEKVSFELLEEKVAKEEIPPRCDRCGGMLRPDVVLFGDPMPHAFDLALKEVQESDLLIVIGSSLVVAPVNFLPGMVDGLIIINATETPYDYKADVVIREKASYALRNIWNLIKS.

The Deacetylase sirtuin-type domain occupies 4–250 (MDSKNLFKKA…LRNIWNLIKS (247 aa)). Alanine 29, threonine 33, phenylalanine 40, arginine 41, glutamine 107, isoleucine 109, aspartate 110, and histidine 125 together coordinate NAD(+). Phenylalanine 40 contacts nicotinamide. Residues isoleucine 109 and aspartate 110 each contribute to the nicotinamide site. Histidine 125 (proton acceptor) is an active-site residue. Cysteine 133, cysteine 136, cysteine 158, and cysteine 161 together coordinate Zn(2+). NAD(+)-binding residues include serine 198, serine 199, and asparagine 219.

The protein belongs to the sirtuin family. Class U subfamily. The cofactor is Zn(2+).

It localises to the cytoplasm. It carries out the reaction N(6)-acetyl-L-lysyl-[protein] + NAD(+) + H2O = 2''-O-acetyl-ADP-D-ribose + nicotinamide + L-lysyl-[protein]. Functionally, NAD-dependent protein deacetylase which modulates the activities of several enzymes which are inactive in their acetylated form. The polypeptide is NAD-dependent protein deacetylase 2 (Caldanaerobacter subterraneus subsp. tengcongensis (strain DSM 15242 / JCM 11007 / NBRC 100824 / MB4) (Thermoanaerobacter tengcongensis)).